The following is a 73-amino-acid chain: U-scoloptoxin(15)-Sm3a (73 aa).

The N-terminal stretch at 1–23 is a signal peptide; that stretch reads MERKVFLLLFVIVLLTLPGFMSA.

It belongs to the scoloptoxin-15 family. Contains 2 disulfide bonds. In terms of tissue distribution, expressed by the venom gland.

It is found in the secreted. This is U-scoloptoxin(15)-Sm3a from Scolopendra morsitans (Tanzanian blue ringleg centipede).